The following is a 28-amino-acid chain: Dermaseptin-6TR (28 aa).

In terms of tissue distribution, expressed by the skin glands.

It localises to the secreted. Its function is as follows. Has antimicrobial activity. This Phyllomedusa trinitatis (Trinidad leaf frog) protein is Dermaseptin-6TR.